Here is a 364-residue protein sequence, read N- to C-terminus: DNA replication and repair protein RecF (364 aa).

30-37 (GENGSGKT) provides a ligand contact to ATP.

It belongs to the RecF family.

Its subcellular location is the cytoplasm. The RecF protein is involved in DNA metabolism; it is required for DNA replication and normal SOS inducibility. RecF binds preferentially to single-stranded, linear DNA. It also seems to bind ATP. The polypeptide is DNA replication and repair protein RecF (Pseudoalteromonas translucida (strain TAC 125)).